The chain runs to 219 residues: Epididymal secretory glutathione peroxidase (219 aa).

A signal peptide spans 1–21 (MTVQLGAFYLFPLFMAGFVQT). Residue C71 is part of the active site.

This sequence belongs to the glutathione peroxidase family. Homotetramer. As to expression, proximal caput epididymis.

Its subcellular location is the secreted. The catalysed reaction is 2 glutathione + H2O2 = glutathione disulfide + 2 H2O. Its function is as follows. May constitute a glutathione peroxidase-like protective system against peroxide damage in sperm membrane lipids. Since the purified porcine enzyme has very little activity towards hydrogen peroxide or organic hydroperoxides the protective effect is not likely to be exerted by its enzymatic activity. Instead, may protect sperm from premature acrosome reaction in the epididymis by binding to lipid peroxides, which might otherwise interact with phospholipase A2 and induce the acrosome reaction. The protein is Epididymal secretory glutathione peroxidase (GPX5) of Sus scrofa (Pig).